The chain runs to 103 residues: Matrix Gla protein (103 aa).

The first 19 residues, Met-1–Cys-19, serve as a signal peptide directing secretion. 4-carboxyglutamate is present on Glu-21. Phosphoserine is present on residues Ser-22, Ser-25, and Ser-28. The 47-residue stretch at His-51–Arg-97 folds into the Gla domain. Residues Glu-56, Glu-60, Glu-67, and Glu-71 each carry the 4-carboxyglutamate modification. Cys-73 and Cys-79 are oxidised to a cystine.

Belongs to the osteocalcin/matrix Gla protein family. In terms of processing, requires vitamin K-dependent gamma-carboxylation for its function.

The protein resides in the secreted. In terms of biological role, associates with the organic matrix of bone and cartilage. Thought to act as an inhibitor of bone formation. This Rattus norvegicus (Rat) protein is Matrix Gla protein (Mgp).